Here is a 103-residue protein sequence, read N- to C-terminus: Nucleoid-associated protein A2cp1_3777 (103 aa).

The protein belongs to the YbaB/EbfC family. Homodimer.

The protein resides in the cytoplasm. It localises to the nucleoid. In terms of biological role, binds to DNA and alters its conformation. May be involved in regulation of gene expression, nucleoid organization and DNA protection. The chain is Nucleoid-associated protein A2cp1_3777 from Anaeromyxobacter dehalogenans (strain 2CP-1 / ATCC BAA-258).